The chain runs to 90 residues: YcgL domain-containing protein Spro_2755 (90 aa).

Positions 1-85 (MLCVIYRSSK…PLENLLKQHL (85 aa)) constitute a YcgL domain.

The chain is YcgL domain-containing protein Spro_2755 from Serratia proteamaculans (strain 568).